The sequence spans 523 residues: MLSRLARVQPKCQQLAHFSTSKSAAAAPTVKLWIDGQAVESKTTDFVELTNPATNEVIAMVPNATQAEMQAAVDSAKNAFNTWKNTSPLTRQQCMFKLQALIKRDMKKLAESITIEQGKTLPDAEGDVSRGLQVVEHACSVPSLMMGETLPNVSRDMDTHSYRIPLGVTAGICPFNFPAMIPLWMFPVALATGNTMVIKPSEQDPGAAQLLVELAKEAGVPDGCVNIIHGQHSAVNFICDNPDIKAISFVGGDAAGKHIYERGAKNGKRVQSNMGAKNHGVIMADANKEQTLNQLTAAAFGAAGQRCMALTTAVLVGEARAWLPELVEKAKNLKVNAGWKPDTDIGPLISKQSKARVLRLIESAKKEGAQVPLDGSNITVPGFENGNFVGPTILAGVKPNMTCYREEIFGPVLVVMEAENLNEAIEIINNNPYGNGTAIFTSNGATARKFTNEVDVGQIGINVPIPVPLPMFSFTGSRGSFLGDLNFYGKAGIQFYTQWKTVTQYWNESLTELKPQMSFPQLK.

The transit peptide at 1–22 directs the protein to the mitochondrion; that stretch reads MLSRLARVQPKCQQLAHFSTSK. 3 residues coordinate NAD(+): F175, K199, and E202. C307 acts as the Nucleophile in catalysis. Residue E407 participates in NAD(+) binding.

The protein belongs to the aldehyde dehydrogenase family. In terms of assembly, homodimer.

The protein resides in the mitochondrion. It catalyses the reaction 2-methyl-3-oxopropanoate + NAD(+) + CoA + H2O = propanoyl-CoA + hydrogencarbonate + NADH + H(+). The enzyme catalyses 3-oxopropanoate + NAD(+) + CoA + H2O = hydrogencarbonate + acetyl-CoA + NADH + H(+). Functionally, probable malonate and methylmalonate semialdehyde dehydrogenase involved in the catabolism of valine, thymine, and compounds catabolized by way of beta-alanine, including uracil and cytidine. The polypeptide is Probable methylmalonate-semialdehyde/malonate-semialdehyde dehydrogenase [acylating], mitochondrial (alh-8) (Caenorhabditis elegans).